Here is a 308-residue protein sequence, read N- to C-terminus: Probable 5-dehydro-4-deoxyglucarate dehydratase (308 aa).

This sequence belongs to the DapA family.

It carries out the reaction 5-dehydro-4-deoxy-D-glucarate + H(+) = 2,5-dioxopentanoate + CO2 + H2O. Its pathway is carbohydrate acid metabolism; D-glucarate degradation; 2,5-dioxopentanoate from D-glucarate: step 2/2. In Bacillus licheniformis (strain ATCC 14580 / DSM 13 / JCM 2505 / CCUG 7422 / NBRC 12200 / NCIMB 9375 / NCTC 10341 / NRRL NRS-1264 / Gibson 46), this protein is Probable 5-dehydro-4-deoxyglucarate dehydratase.